Here is a 338-residue protein sequence, read N- to C-terminus: Glycerol-3-phosphate dehydrogenase [NAD(P)+] (338 aa).

NADPH contacts are provided by serine 14, tyrosine 15, histidine 35, and lysine 109. The sn-glycerol 3-phosphate site is built by lysine 109, glycine 138, and threonine 140. Position 142 (alanine 142) interacts with NADPH. Sn-glycerol 3-phosphate-binding residues include lysine 194, aspartate 247, serine 257, arginine 258, and asparagine 259. Catalysis depends on lysine 194, which acts as the Proton acceptor. Arginine 258 lines the NADPH pocket. Residues valine 282 and glutamate 284 each contribute to the NADPH site.

This sequence belongs to the NAD-dependent glycerol-3-phosphate dehydrogenase family.

It is found in the cytoplasm. It carries out the reaction sn-glycerol 3-phosphate + NAD(+) = dihydroxyacetone phosphate + NADH + H(+). The enzyme catalyses sn-glycerol 3-phosphate + NADP(+) = dihydroxyacetone phosphate + NADPH + H(+). Its pathway is membrane lipid metabolism; glycerophospholipid metabolism. Functionally, catalyzes the reduction of the glycolytic intermediate dihydroxyacetone phosphate (DHAP) to sn-glycerol 3-phosphate (G3P), the key precursor for phospholipid synthesis. The chain is Glycerol-3-phosphate dehydrogenase [NAD(P)+] from Shewanella putrefaciens (strain CN-32 / ATCC BAA-453).